The sequence spans 391 residues: Ferrochelatase (391 aa).

2 residues coordinate Fe cation: His-196 and Glu-281.

The protein belongs to the ferrochelatase family.

Its subcellular location is the cytoplasm. The enzyme catalyses heme b + 2 H(+) = protoporphyrin IX + Fe(2+). It functions in the pathway porphyrin-containing compound metabolism; protoheme biosynthesis; protoheme from protoporphyrin-IX: step 1/1. Functionally, catalyzes the ferrous insertion into protoporphyrin IX. The chain is Ferrochelatase from Synechococcus sp. (strain CC9605).